A 1050-amino-acid polypeptide reads, in one-letter code: Calmodulin-binding transcription activator 2 (1050 aa).

Positions 15–141 (IKQLLSEAQH…YLEVKGNRMS (127 aa)) form a DNA-binding region, CG-1. 2 stretches are compositionally biased toward polar residues: residues 141 to 171 (STSGTKENHSNSLSGTGSVNVDSTATRSSIL) and 183 to 196 (SRQASSSLQQNPEP). Disordered stretches follow at residues 141–196 (STSG…NPEP) and 223–246 (NRDGWTSAHGNRVKGSNSQRSGDV). 2 ANK repeats span residues 661–690 (DGQGVLHLAAALGYDWAIKPILAAGVSINF) and 694–723 (NGWSALHWAAFSGREDTVAVLVSLGADAGA). IQ domains lie at 870-899 (VHAAAVQIQKKYRGWKKRKEFLLIRQRIVK) and 893-922 (IRQRIVKIQAHVRGHQVRKQYRAIIWSVGL). The calmodulin-binding stretch occupies residues 918–940 (WSVGLLEKIILRWRRKGSGLRGF). The stretch at 957 to 985 (QEDDYDFLKEGRKQTEERLQKALTRVKSM) forms a coiled coil. Ser-984 carries the post-translational modification Phosphoserine.

This sequence belongs to the CAMTA family. As to expression, expressed in roots, stems, old leaves, petals, sepals, top of carpels, stigmas, stamen filaments, anthers and siliques, but not in pollen.

Its subcellular location is the nucleus. In terms of biological role, transcription activator that binds to the DNA consensus sequence 5'-[ACG]CGCG[GTC]-3'. Regulates transcriptional activity in response to calcium signals. Binds calmodulin in a calcium-dependent manner. Involved in freezing tolerance in association with CAMTA1 and CAMTA3. Contributes together with CAMTA1 and CAMTA3 to the positive regulation of the cold-induced expression of DREB1A/CBF3, DREB1B/CBF1 and DREB1C/CBF2. Involved together with CAMTA3 and CAMTA4 in the positive regulation of a general stress response. Involved in tolerance to aluminum. Binds to the promoter of ALMT1 transporter and contributes to the positive regulation of aluminum-induced expression of ALMT1. The polypeptide is Calmodulin-binding transcription activator 2 (Arabidopsis thaliana (Mouse-ear cress)).